Consider the following 221-residue polypeptide: Deoxyribose-phosphate aldolase (221 aa).

Asp-89 serves as the catalytic Proton donor/acceptor. Lys-151 acts as the Schiff-base intermediate with acetaldehyde in catalysis. The Proton donor/acceptor role is filled by Lys-180.

Belongs to the DeoC/FbaB aldolase family. DeoC type 1 subfamily.

It is found in the cytoplasm. The catalysed reaction is 2-deoxy-D-ribose 5-phosphate = D-glyceraldehyde 3-phosphate + acetaldehyde. It functions in the pathway carbohydrate degradation; 2-deoxy-D-ribose 1-phosphate degradation; D-glyceraldehyde 3-phosphate and acetaldehyde from 2-deoxy-alpha-D-ribose 1-phosphate: step 2/2. Catalyzes a reversible aldol reaction between acetaldehyde and D-glyceraldehyde 3-phosphate to generate 2-deoxy-D-ribose 5-phosphate. In Mesomycoplasma hyopneumoniae (strain J / ATCC 25934 / NCTC 10110) (Mycoplasma hyopneumoniae), this protein is Deoxyribose-phosphate aldolase.